The chain runs to 176 residues: Ribosome maturation factor RimM (176 aa).

A PRC barrel domain is found at 97–176 (EDEFYWRDLI…QIIVDWDPDF (80 aa)).

Belongs to the RimM family. In terms of assembly, binds ribosomal protein uS19.

It is found in the cytoplasm. Functionally, an accessory protein needed during the final step in the assembly of 30S ribosomal subunit, possibly for assembly of the head region. Essential for efficient processing of 16S rRNA. May be needed both before and after RbfA during the maturation of 16S rRNA. It has affinity for free ribosomal 30S subunits but not for 70S ribosomes. The polypeptide is Ribosome maturation factor RimM (Shewanella amazonensis (strain ATCC BAA-1098 / SB2B)).